Consider the following 275-residue polypeptide: Phosphate import ATP-binding protein PstB 1 (275 aa).

In terms of domain architecture, ABC transporter spans 22–261 (LETQAVSVYY…NRTEKIFNSP (240 aa)). Residue 54 to 61 (GPSGCGKS) coordinates ATP.

The protein belongs to the ABC transporter superfamily. Phosphate importer (TC 3.A.1.7) family. As to quaternary structure, the complex is composed of two ATP-binding proteins (PstB), two transmembrane proteins (PstC and PstA) and a solute-binding protein (PstS).

The protein resides in the cell inner membrane. It carries out the reaction phosphate(out) + ATP + H2O = ADP + 2 phosphate(in) + H(+). Functionally, part of the ABC transporter complex PstSACB involved in phosphate import. Responsible for energy coupling to the transport system. This Synechococcus sp. (strain JA-2-3B'a(2-13)) (Cyanobacteria bacterium Yellowstone B-Prime) protein is Phosphate import ATP-binding protein PstB 1.